Reading from the N-terminus, the 128-residue chain is MNITLLSGKIHRATVTQAELNYVGSITIDQDLLEAAGIMEYEKVCVVNINNGIRLETYTIAGEKGSGIICLNGAAARYAQVSDKVIIMAYAQMTKEEAQKHKPNVVFVDDNNRITRKTNYEKHGQIVE.

Ser25 functions as the Schiff-base intermediate with substrate; via pyruvic acid in the catalytic mechanism. At Ser25 the chain carries Pyruvic acid (Ser). Position 57 (Thr57) interacts with substrate. Tyr58 (proton donor) is an active-site residue. Gly73 to Ala75 lines the substrate pocket.

The protein belongs to the PanD family. Heterooctamer of four alpha and four beta subunits. Requires pyruvate as cofactor. Post-translationally, is synthesized initially as an inactive proenzyme, which is activated by self-cleavage at a specific serine bond to produce a beta-subunit with a hydroxyl group at its C-terminus and an alpha-subunit with a pyruvoyl group at its N-terminus.

Its subcellular location is the cytoplasm. It catalyses the reaction L-aspartate + H(+) = beta-alanine + CO2. The protein operates within cofactor biosynthesis; (R)-pantothenate biosynthesis; beta-alanine from L-aspartate: step 1/1. Catalyzes the pyruvoyl-dependent decarboxylation of aspartate to produce beta-alanine. The polypeptide is Aspartate 1-decarboxylase (Ruminiclostridium cellulolyticum (strain ATCC 35319 / DSM 5812 / JCM 6584 / H10) (Clostridium cellulolyticum)).